The chain runs to 1411 residues: DNA-directed RNA polymerase subunit beta' (1411 aa).

Residues C70, C72, C85, and C88 each contribute to the Zn(2+) site. D460, D462, and D464 together coordinate Mg(2+). 4 residues coordinate Zn(2+): C814, C888, C895, and C898.

It belongs to the RNA polymerase beta' chain family. The RNAP catalytic core consists of 2 alpha, 1 beta, 1 beta' and 1 omega subunit. When a sigma factor is associated with the core the holoenzyme is formed, which can initiate transcription. Mg(2+) serves as cofactor. The cofactor is Zn(2+).

The catalysed reaction is RNA(n) + a ribonucleoside 5'-triphosphate = RNA(n+1) + diphosphate. Functionally, DNA-dependent RNA polymerase catalyzes the transcription of DNA into RNA using the four ribonucleoside triphosphates as substrates. This Idiomarina loihiensis (strain ATCC BAA-735 / DSM 15497 / L2-TR) protein is DNA-directed RNA polymerase subunit beta'.